Here is a 449-residue protein sequence, read N- to C-terminus: Nucleoprotein (449 aa).

Residues 1–55 (MSFTPGKQSSSRASSGNRSGNGILKWADQSDQSRNVQTRGRRVQSKQTATSQQPS) form a disordered region. The span at 9–22 (SSSRASSGNRSGNG) shows a compositional bias: low complexity. Composition is skewed to polar residues over residues 29-38 (QSDQSRNVQT) and 45-55 (SKQTATSQQPS). The interval 52–194 (QQPSGGTVVP…GYYIEGSGRS (143 aa)) is RNA-binding. One can recognise a CoV N NTD domain in the interval 61-190 (PYYSWFSGIT…VLPQGYYIEG (130 aa)). RNA-binding residues include R106, R122, and R164. 3 disordered regions span residues 158–231 (PADI…VTPD), 266–297 (ILNKPRQKRSPNKQCTVQQCFGKRGPNQNFGG), and 387–449 (MMNI…TSEI). At S167 the chain carries Phosphoserine; by host. The residue at position 174 (T174) is a Phosphothreonine; by host. S191 carries the phosphoserine; by host modification. Polar residues-rich tracts occupy residues 194–204 (SAPNSRSTSRA) and 212–227 (GSRSRANSGNRTSTPG). A CoV N CTD domain is found at 259-384 (AKEVRQKILN…QNLNAYQHQE (126 aa)). The segment covering 266-276 (ILNKPRQKRSP) has biased composition (basic residues). The tract at residues 266–385 (ILNKPRQKRS…NLNAYQHQED (120 aa)) is dimerization. Residue S391 is modified to Phosphoserine; by host. Residues 400 to 410 (QKNGQVENDNI) are compositionally biased toward polar residues. Over residues 423 to 440 (KSRELTAEDISLLKKMDE) the composition is skewed to basic and acidic residues. S424 carries the post-translational modification Phosphoserine; by host. At T428 the chain carries Phosphothreonine; by host.

This sequence belongs to the betacoronavirus nucleocapsid protein family. As to quaternary structure, homooligomer. Both monomeric and oligomeric forms interact with RNA. Interacts with protein M. Interacts with NSP3; this interaction serves to tether the genome to the newly translated replicase-transcriptase complex at a very early stage of infection. ADP-ribosylated. The ADP-ribosylation is retained in the virion during infection. In terms of processing, phosphorylated on serine and threonine residues.

Its subcellular location is the virion. It localises to the host endoplasmic reticulum-Golgi intermediate compartment. It is found in the host Golgi apparatus. In terms of biological role, packages the positive strand viral genome RNA into a helical ribonucleocapsid (RNP) and plays a fundamental role during virion assembly through its interactions with the viral genome and membrane protein M. Plays an important role in enhancing the efficiency of subgenomic viral RNA transcription as well as viral replication. In Sus scrofa (Pig), this protein is Nucleoprotein.